The primary structure comprises 246 residues: MAGYLKLVCVSFQRQGFHTVGSRCKNRTGAEHLWLTRHLRDPFVKAAKVESYRCRSAFKLLEVNERHQILRPGLRVLDCGAAPGAWSQVAVQKVNAAGTDPSSPVGFVLGVDLLHIFPLEGATFLCPADVTDPRTSQRILEVLPGRRADVILSDMAPNATGFRDLDHDRLISLCLTLLSVTPDILQPGGTFLCKTWAGSQSRRLQRRLTEEFQNVRIIKPEASRKESSEVYFLATQYHGRKGTVKQ.

The N-terminal 18 residues, 1–18, are a transit peptide targeting the mitochondrion; it reads MAGYLKLVCVSFQRQGFH. S-adenosyl-L-methionine is bound by residues 83–86, D112, 129–130, and D154; these read PGAW and DV. Residue K194 is the Proton acceptor of the active site.

This sequence belongs to the class I-like SAM-binding methyltransferase superfamily. RNA methyltransferase RlmE family. As to expression, widely expressed, with highest expression in muscle, placenta, and heart.

Its subcellular location is the mitochondrion. The catalysed reaction is uridine(1369) in 16S rRNA + S-adenosyl-L-methionine = 2'-O-methyluridine(1369) in 16S rRNA + S-adenosyl-L-homocysteine + H(+). Functionally, S-adenosyl-L-methionine-dependent 2'-O-ribose methyltransferase that catalyzes the formation of 2'-O-methyluridine at position 1369 (Um1369) in the 16S mitochondrial large subunit ribosomal RNA (mtLSU rRNA), a universally conserved modification in the peptidyl transferase domain of the mtLSU rRNA. This activity may require prior 2'-O-methylguanosine modification at position 1370 (Gm1370) by MRM3. Essential for late-stage assembly of mtLSU required for efficient translation of mitochondrial DNA encoded proteins; methyltransferase activity is not required for this function. Essential for mitochondrial respiratory function. The protein is rRNA methyltransferase 2, mitochondrial of Homo sapiens (Human).